The sequence spans 127 residues: Fluoride-specific ion channel FluC (127 aa).

The next 4 membrane-spanning stretches (helical) occupy residues 7–27, 31–51, 68–88, and 97–117; these read LLVALGGALGSLLRYGLGAWV, LGAGFPWSTLFVNALGSFLIG, LFLAVGVLGGFTTFSSLSYET, and VGKALLYAFGSLFLGLLLAFL. Residues glycine 76 and threonine 79 each contribute to the Na(+) site.

It belongs to the fluoride channel Fluc/FEX (TC 1.A.43) family.

It localises to the cell inner membrane. It catalyses the reaction fluoride(in) = fluoride(out). With respect to regulation, na(+) is not transported, but it plays an essential structural role and its presence is essential for fluoride channel function. Fluoride-specific ion channel. Important for reducing fluoride concentration in the cell, thus reducing its toxicity. The sequence is that of Fluoride-specific ion channel FluC from Thermus thermophilus (strain ATCC BAA-163 / DSM 7039 / HB27).